The following is a 216-amino-acid chain: Putative flagellar filament outer layer-like protein (216 aa).

Positions 1 to 22 are disordered; that stretch reads MFAQDAAQTGEQTTQNQGENGN. Low complexity predominate over residues 8–22; sequence QTGEQTTQNQGENGN.

Its subcellular location is the periplasmic flagellum. The protein resides in the periplasm. In terms of biological role, might be part of the flagella. The polypeptide is Putative flagellar filament outer layer-like protein (flaAL) (Brachyspira hyodysenteriae (strain ATCC 49526 / WA1)).